The following is a 151-amino-acid chain: Probable transcriptional regulator syrB2 (151 aa).

A disordered region spans residues 1-61 (MADESNTGSI…PRRYSEQQRK (61 aa)). Low complexity predominate over residues 11–23 (AAAVAPNADVKAP). Over residues 24 to 35 (AAKKKRSPRRQK) the composition is skewed to basic residues.

Belongs to the SyrB family.

Its function is as follows. Seems to affect the transcription of cya3. May be negatively autoregulated. This is Probable transcriptional regulator syrB2 (syrB2) from Rhizobium meliloti (strain 1021) (Ensifer meliloti).